Reading from the N-terminus, the 547-residue chain is Riboflavin transporter RibJ (547 aa).

Over 1 to 11 (MLPSFTRKPAD) the chain is Cytoplasmic. The chain crosses the membrane as a helical span at residues 12 to 32 (HPIGYLVALSGLLMQLMSYGI). Residues 33-58 (DNSYSIFSEDMHNDPSLGFPSITAIS) are Extracellular-facing. A helical transmembrane segment spans residues 59–79 (LGNSVSLGLSPAFGVLAGFCV). The Cytoplasmic segment spans residues 80 to 85 (DRLPPR). A helical transmembrane segment spans residues 86–106 (FMMALSTILLFTGLWISSTLA). Over 107–108 (AN) the chain is Extracellular. The helical transmembrane segment at 109-129 (IYVVTFTYCLFASIGTACMLS) threads the bilayer. Residues 130-144 (PGAAATSSWFNRYQG) are Cytoplasmic-facing. A helical membrane pass occupies residues 145–165 (LAMGINFAGGGIGSAIIPPLA). Residues 166 to 175 (GKWVVAYGWR) are Extracellular-facing. Residues 176–196 (KAFQLMSIFCAIGVLATALSA) form a helical membrane-spanning segment. At 197–344 (RRREPKRDDS…MFTLPFMGNF (148 aa)) the chain is on the cytoplasmic side. The tract at residues 198 to 293 (RREPKRDDSS…EGLDVTEQSQ (96 aa)) is disordered. The segment covering 244–255 (NEGKEDVREMGR) has biased composition (basic and acidic residues). Residues 345 to 365 (LCWFIYSWAFYSLIYAAVPYI) traverse the membrane as a helical segment. Topologically, residues 366-386 (SSMGKPGTVYAGVPPIPTDVA) are extracellular. Residues 387–407 (ATLFTFYGVFQVVGSVLVGWL) form a helical membrane-spanning segment. Topologically, residues 408 to 412 (ASLVT) are cytoplasmic. The helical transmembrane segment at 413–433 (AEFAYVFCATVGGIGCGLLAL) threads the bilayer. Residues 434–437 (GRSY) are Extracellular-facing. The chain crosses the membrane as a helical span at residues 438–458 (VAFALLLCIIGFCMAGMFAVM). Topologically, residues 459–470 (PTLIATHLYGPN) are cytoplasmic. The chain crosses the membrane as a helical span at residues 471–491 (LGFYFGAVFLAGVVGGFVAPP). At 492–505 (MQATIQLRNNGSYA) the chain is on the extracellular side. The N-linked (GlcNAc...) asparagine glycan is linked to Asn501. The helical transmembrane segment at 506 to 526 (FVCVVMSVSMTLSALVCYATL) threads the bilayer. Topologically, residues 527-547 (WRSKRSGIVLAARKTKLVEIM) are cytoplasmic.

This sequence belongs to the major facilitator superfamily. RibJ family.

The protein resides in the cell membrane. In terms of biological role, transporter involved in riboflavin (vitamin B2) uptake. Also transports FMN and FAD. This Trypanosoma brucei brucei (strain 927/4 GUTat10.1) protein is Riboflavin transporter RibJ.